The sequence spans 270 residues: Transcriptional regulator BrlR (270 aa).

Position 1 (M1) interacts with 3',3'-c-di-GMP. The region spanning 1 to 71 is the HTH merR-type domain; the sequence is MLTIGQLARI…LEAIDRLKRD (71 aa). A DNA-binding region (H-T-H motif) is located at residues 4-23; it reads IGQLARIFEISTKTLRHYDA. The 3',3'-c-di-GMP site is built by R31, S34, D35, Y40, R67, R70, R86, and Y270. Residues 120-270 are involved in effector-binding, probably including pyocyanine-binding; sequence MHARIVERPA…SQVDLYIPIY (151 aa).

In terms of assembly, monomer. Homodimer; dimer formation enhanced in the presence of the second messenger, cyclic di-GMP (c-di-GMP). Homotetramer; dimer of dimers, arranged in a head-to-tail fashion, which may reduce DNA-binding ability. Conformational changes upon binding c-di-GMP or pyocyanine may facilitate DNA binding.

Transcriptional regulator. Responsive to the second messenger cyclic di-GMP (c-di-GMP) and to the virulence factor pyocyanine, which both enhance gene expression and promoter DNA binding of BrlR. Activates expression of operons encoding the multidrug efflux pumps MexAB-OprM and MexEF-OprN and several ABC transport systems, acting by direct binding to their respective promoters. Also acts as a repressor of the two component regulatory system, PhoPQ. Binds to promoter of its own gene. Contributes to the antimicrobial tolerance exhibited by biofilms, acting, at least in part, by activating expression of multidrug efflux pumps and ABC transporters. In Pseudomonas aeruginosa (strain ATCC 15692 / DSM 22644 / CIP 104116 / JCM 14847 / LMG 12228 / 1C / PRS 101 / PAO1), this protein is Transcriptional regulator BrlR.